The primary structure comprises 750 residues: Photosystem I P700 chlorophyll a apoprotein A1 (750 aa).

8 consecutive transmembrane segments (helical) span residues valine 70–alanine 93, leucine 156–histidine 179, leucine 195–leucine 219, isoleucine 291–tyrosine 309, tryptophan 346–tyrosine 369, leucine 385–valine 411, alanine 433–histidine 455, and phenylalanine 531–leucine 549. Cysteine 573 and cysteine 582 together coordinate [4Fe-4S] cluster. The next 2 helical transmembrane spans lie at histidine 589–tryptophan 610 and leucine 664–phenylalanine 686. A chlorophyll a'-binding site is contributed by histidine 675. Residues methionine 683 and tyrosine 691 each coordinate chlorophyll a. Tryptophan 692 lines the phylloquinone pocket. The helical transmembrane segment at alanine 724 to alanine 744 threads the bilayer.

This sequence belongs to the PsaA/PsaB family. As to quaternary structure, the PsaA/B heterodimer binds the P700 chlorophyll special pair and subsequent electron acceptors. PSI consists of a core antenna complex that captures photons, and an electron transfer chain that converts photonic excitation into a charge separation. The eukaryotic PSI reaction center is composed of at least 11 subunits. P700 is a chlorophyll a/chlorophyll a' dimer, A0 is one or more chlorophyll a, A1 is one or both phylloquinones and FX is a shared 4Fe-4S iron-sulfur center. serves as cofactor.

The protein localises to the plastid. The protein resides in the chloroplast thylakoid membrane. It catalyses the reaction reduced [plastocyanin] + hnu + oxidized [2Fe-2S]-[ferredoxin] = oxidized [plastocyanin] + reduced [2Fe-2S]-[ferredoxin]. PsaA and PsaB bind P700, the primary electron donor of photosystem I (PSI), as well as the electron acceptors A0, A1 and FX. PSI is a plastocyanin-ferredoxin oxidoreductase, converting photonic excitation into a charge separation, which transfers an electron from the donor P700 chlorophyll pair to the spectroscopically characterized acceptors A0, A1, FX, FA and FB in turn. Oxidized P700 is reduced on the lumenal side of the thylakoid membrane by plastocyanin. The protein is Photosystem I P700 chlorophyll a apoprotein A1 of Morus indica (Mulberry).